Reading from the N-terminus, the 463-residue chain is DNA-binding protein K10 (463 aa).

Polar residues predominate over residues 1–13 (MVSKNQFYQNWTM). A disordered region spans residues 1–304 (MVSKNQFYQN…RNGPGPGPMM (304 aa)). Residues 14–50 (QSQQQHPHQMQQQFQQQQQPNLQHRNNQSNNNNCNNN) show a composition bias toward low complexity. A compositionally biased stretch (polar residues) spans 85-94 (QMMFSSSQMP). Tandem repeats lie at residues 87–94 (MFSSSQMP), 95–102 (SDPLYIDF), 103–110 (SSPPPGFK), 111–118 (HNQVGSPK), 119–126 (KKSMKGIK), 127–134 (QQQHPSPN), and 135–142 (QQQPPSPN). The interval 87-142 (MFSSSQMPSDPLYIDFSSPPPGFKHNQVGSPKKKSMKGIKQQQHPSPNQQQPPSPN) is 7 X approximate tandem repeats. The segment covering 142-193 (NQQQHPSPNQQQHPSPNQQQHPNSNQQQHLSPNQQQGKMNNQNNNHMNQSQQ) has biased composition (low complexity). Positions 194–214 (PFNNQMNGSDWQRHPGNNPNQ) are enriched in polar residues. Composition is skewed to pro residues over residues 225–270 (GPPP…PPVP) and 282–291 (GGPPPPPPPL). A DNA-binding region (H-T-H motif) is located at residues 397-416 (DELFAQYKGQRDKFVSLYEA). A disordered region spans residues 426–463 (AATVKAKDAKSDKDKNAISSQSAAPKAGSAKDATIPNP). Residues 430–441 (KAKDAKSDKDKN) show a composition bias toward basic and acidic residues.

In terms of assembly, interacts (via N-terminus) with sqd; the interaction is direct and may be involved in localization of sqd to the oocyte during oogenesis.

Its subcellular location is the nucleus. May be involved in localization of sqd to the oocyte during oogenesis. The chain is DNA-binding protein K10 (fs(1)K10) from Drosophila melanogaster (Fruit fly).